Reading from the N-terminus, the 254-residue chain is Small ribosomal subunit protein uS3 (254 aa).

In terms of domain architecture, KH type-2 spans 38-106; sequence IRKYVLARIP…DVQINIFEIK (69 aa). Low complexity predominate over residues 215-238; sequence NVGNAASGASSSSNNDNASPNQGG. Residues 215–254 are disordered; that stretch reads NVGNAASGASSSSNNDNASPNQGGPRRKRGGEGNRKKSNK. Residues 244 to 254 are compositionally biased toward basic and acidic residues; sequence GGEGNRKKSNK.

This sequence belongs to the universal ribosomal protein uS3 family. As to quaternary structure, part of the 30S ribosomal subunit. Forms a tight complex with proteins S10 and S14.

Functionally, binds the lower part of the 30S subunit head. Binds mRNA in the 70S ribosome, positioning it for translation. The chain is Small ribosomal subunit protein uS3 from Cytophaga hutchinsonii (strain ATCC 33406 / DSM 1761 / CIP 103989 / NBRC 15051 / NCIMB 9469 / D465).